The sequence spans 284 residues: Ribosomal RNA small subunit methyltransferase A (284 aa).

S-adenosyl-L-methionine is bound by residues asparagine 28, leucine 30, glycine 55, glutamate 77, aspartate 103, and asparagine 123.

This sequence belongs to the class I-like SAM-binding methyltransferase superfamily. rRNA adenine N(6)-methyltransferase family. RsmA subfamily.

It localises to the cytoplasm. The catalysed reaction is adenosine(1518)/adenosine(1519) in 16S rRNA + 4 S-adenosyl-L-methionine = N(6)-dimethyladenosine(1518)/N(6)-dimethyladenosine(1519) in 16S rRNA + 4 S-adenosyl-L-homocysteine + 4 H(+). In terms of biological role, specifically dimethylates two adjacent adenosines (A1518 and A1519) in the loop of a conserved hairpin near the 3'-end of 16S rRNA in the 30S particle. May play a critical role in biogenesis of 30S subunits. The sequence is that of Ribosomal RNA small subunit methyltransferase A from Bradyrhizobium diazoefficiens (strain JCM 10833 / BCRC 13528 / IAM 13628 / NBRC 14792 / USDA 110).